The chain runs to 607 residues: Elongation factor 4 (607 aa).

A tr-type G domain is found at 11–193; that stretch reads EKIRNFSIIA…QIVEKVPAPQ (183 aa). Residues 23-28 and 140-143 contribute to the GTP site; these read DHGKST and NKID.

The protein belongs to the TRAFAC class translation factor GTPase superfamily. Classic translation factor GTPase family. LepA subfamily.

It is found in the cell membrane. It carries out the reaction GTP + H2O = GDP + phosphate + H(+). Its function is as follows. Required for accurate and efficient protein synthesis under certain stress conditions. May act as a fidelity factor of the translation reaction, by catalyzing a one-codon backward translocation of tRNAs on improperly translocated ribosomes. Back-translocation proceeds from a post-translocation (POST) complex to a pre-translocation (PRE) complex, thus giving elongation factor G a second chance to translocate the tRNAs correctly. Binds to ribosomes in a GTP-dependent manner. In Lactococcus lactis subsp. cremoris (strain MG1363), this protein is Elongation factor 4.